Consider the following 429-residue polypeptide: Septin-11 (429 aa).

N-acetylalanine is present on Ala2. Ser9 bears the Phosphoserine mark. Residues Gln38–Glu304 form the Septin-type G domain. Positions Gly48 to Ser55 are G1 motif. GTP-binding positions include Gly48–Ser55, Gly103, Lys184–Glu192, Gly238, and Arg253. The interval Asp100–Gly103 is G3 motif. The G4 motif stretch occupies residues Ala183 to Asp186. The stretch at Gln320–Gln415 forms a coiled coil. The segment at Lys398–Thr429 is disordered. Low complexity predominate over residues Ala401–Gln416. A compositionally biased stretch (basic and acidic residues) spans Thr417–Thr429.

It belongs to the TRAFAC class TrmE-Era-EngA-EngB-Septin-like GTPase superfamily. Septin GTPase family. As to quaternary structure, septins polymerize into heterooligomeric protein complexes that form filaments, and can associate with cellular membranes, actin filaments and microtubules. Forms homooligomers. GTPase activity is required for filament formation. Interacts with SEPTIN7, SEPTIN9 and SEPTIN12. As to expression, widely expressed, except in leukocytes.

It localises to the cytoplasm. Its subcellular location is the cytoskeleton. It is found in the synapse. The protein localises to the cell projection. The protein resides in the dendritic spine. It localises to the axon. In terms of biological role, filament-forming cytoskeletal GTPase. May play a role in cytokinesis (Potential). May play a role in the cytoarchitecture of neurons, including dendritic arborization and dendritic spines, and in GABAergic synaptic connectivity. During Listeria monocytogenes infection, not required for the bacterial entry process, but restricts its efficacy. This Homo sapiens (Human) protein is Septin-11.